An 89-amino-acid polypeptide reads, in one-letter code: HssA/B-like protein 16 (89 aa).

The protein belongs to the hssA/B family.

The chain is HssA/B-like protein 16 (hssl16) from Dictyostelium discoideum (Social amoeba).